Here is a 355-residue protein sequence, read N- to C-terminus: Guanine nucleotide-binding protein G(i) subunit alpha-2 (355 aa).

A lipid anchor (N-myristoyl glycine) is attached at Gly2. Cys3 carries S-palmitoyl cysteine lipidation. Positions 32–355 (REVKLLLLGA…KNNLKDCGLF (324 aa)) constitute a G-alpha domain. The interval 35–48 (KLLLLGAGESGKST) is G1 motif. GTP-binding positions include 40–47 (GAGESGKS), 176–182 (LRTRVKT), 201–205 (DVGGQ), 270–273 (NKKD), and Ala327. Residues Ser47 and Thr182 each coordinate Mg(2+). Residues 174 to 182 (DVLRTRVKT) are G2 motif. A G3 motif region spans residues 197–206 (FKMFDVGGQR). A G4 motif region spans residues 266–273 (ILFLNKKD). Residues 325–330 (TCATDT) are G5 motif.

It belongs to the G-alpha family. G(i/o/t/z) subfamily. As to quaternary structure, g proteins are composed of 3 units; alpha, beta and gamma. The alpha chain contains the guanine nucleotide binding site.

It is found in the cytoplasm. Its subcellular location is the cytoskeleton. The protein localises to the microtubule organizing center. It localises to the centrosome. The protein resides in the cell membrane. Functionally, guanine nucleotide-binding proteins (G proteins) are involved as modulators or transducers in various transmembrane signaling systems. The G(i) proteins are involved in hormonal regulation of adenylate cyclase: they inhibit the cyclase in response to beta-adrenergic stimuli. May play a role in cell division. This is Guanine nucleotide-binding protein G(i) subunit alpha-2 (GNAI2) from Gallus gallus (Chicken).